A 258-amino-acid chain; its full sequence is Tryptophan synthase alpha chain (258 aa).

Catalysis depends on proton acceptor residues glutamate 47 and aspartate 58.

Belongs to the TrpA family. As to quaternary structure, tetramer of two alpha and two beta chains.

It carries out the reaction (1S,2R)-1-C-(indol-3-yl)glycerol 3-phosphate + L-serine = D-glyceraldehyde 3-phosphate + L-tryptophan + H2O. It participates in amino-acid biosynthesis; L-tryptophan biosynthesis; L-tryptophan from chorismate: step 5/5. In terms of biological role, the alpha subunit is responsible for the aldol cleavage of indoleglycerol phosphate to indole and glyceraldehyde 3-phosphate. In Bacillus cereus (strain B4264), this protein is Tryptophan synthase alpha chain.